The primary structure comprises 109 residues: Flagellar hook-basal body complex protein FliE (109 aa).

This sequence belongs to the FliE family.

The protein localises to the bacterial flagellum basal body. This is Flagellar hook-basal body complex protein FliE from Pseudomonas syringae pv. tomato (strain ATCC BAA-871 / DC3000).